The primary structure comprises 546 residues: Chaperonin GroEL 2 (546 aa).

ATP is bound by residues 30 to 33 (TLGP), lysine 51, 87 to 91 (DGTTT), glycine 415, and aspartate 495. The interval 527–546 (DAAPATAPGGPGAGGPGFDF) is disordered. The segment covering 535-546 (GGPGAGGPGFDF) has biased composition (gly residues).

Belongs to the chaperonin (HSP60) family. In terms of assembly, forms a cylinder of 14 subunits composed of two heptameric rings stacked back-to-back. Interacts with the co-chaperonin GroES.

Its subcellular location is the cytoplasm. It catalyses the reaction ATP + H2O + a folded polypeptide = ADP + phosphate + an unfolded polypeptide.. Functionally, together with its co-chaperonin GroES, plays an essential role in assisting protein folding. The GroEL-GroES system forms a nano-cage that allows encapsulation of the non-native substrate proteins and provides a physical environment optimized to promote and accelerate protein folding. The polypeptide is Chaperonin GroEL 2 (Burkholderia ambifaria (strain ATCC BAA-244 / DSM 16087 / CCUG 44356 / LMG 19182 / AMMD) (Burkholderia cepacia (strain AMMD))).